The sequence spans 472 residues: Siroheme synthase (472 aa).

The interval 1 to 207 (MNFLPIFLDI…GKDQAAKAWL (207 aa)) is precorrin-2 dehydrogenase /sirohydrochlorin ferrochelatase. NAD(+)-binding positions include 22-23 (EV) and 43-44 (PR). S132 bears the Phosphoserine mark. Residues 221–472 (GEVYLVGAGP…QPEGNLPGAE (252 aa)) form a uroporphyrinogen-III C-methyltransferase region. P230 is an S-adenosyl-L-methionine binding site. D253 functions as the Proton acceptor in the catalytic mechanism. Catalysis depends on K275, which acts as the Proton donor. Residues 306 to 308 (GGD), I311, 336 to 337 (TA), M388, and G417 each bind S-adenosyl-L-methionine.

It in the N-terminal section; belongs to the precorrin-2 dehydrogenase / sirohydrochlorin ferrochelatase family. This sequence in the C-terminal section; belongs to the precorrin methyltransferase family.

The enzyme catalyses uroporphyrinogen III + 2 S-adenosyl-L-methionine = precorrin-2 + 2 S-adenosyl-L-homocysteine + H(+). The catalysed reaction is precorrin-2 + NAD(+) = sirohydrochlorin + NADH + 2 H(+). It carries out the reaction siroheme + 2 H(+) = sirohydrochlorin + Fe(2+). It functions in the pathway cofactor biosynthesis; adenosylcobalamin biosynthesis; precorrin-2 from uroporphyrinogen III: step 1/1. The protein operates within cofactor biosynthesis; adenosylcobalamin biosynthesis; sirohydrochlorin from precorrin-2: step 1/1. Its pathway is porphyrin-containing compound metabolism; siroheme biosynthesis; precorrin-2 from uroporphyrinogen III: step 1/1. It participates in porphyrin-containing compound metabolism; siroheme biosynthesis; siroheme from sirohydrochlorin: step 1/1. It functions in the pathway porphyrin-containing compound metabolism; siroheme biosynthesis; sirohydrochlorin from precorrin-2: step 1/1. In terms of biological role, multifunctional enzyme that catalyzes the SAM-dependent methylations of uroporphyrinogen III at position C-2 and C-7 to form precorrin-2 via precorrin-1. Then it catalyzes the NAD-dependent ring dehydrogenation of precorrin-2 to yield sirohydrochlorin. Finally, it catalyzes the ferrochelation of sirohydrochlorin to yield siroheme. The polypeptide is Siroheme synthase (Nitrosospira multiformis (strain ATCC 25196 / NCIMB 11849 / C 71)).